The primary structure comprises 388 residues: 3-ketoacyl-CoA thiolase (388 aa).

Residue cysteine 91 is the Acyl-thioester intermediate of the active site. Active-site proton acceptor residues include histidine 343 and cysteine 373.

This sequence belongs to the thiolase-like superfamily. Thiolase family. In terms of assembly, heterotetramer of two alpha chains (FadB) and two beta chains (FadA).

It is found in the cytoplasm. It catalyses the reaction an acyl-CoA + acetyl-CoA = a 3-oxoacyl-CoA + CoA. Its pathway is lipid metabolism; fatty acid beta-oxidation. Its function is as follows. Catalyzes the final step of fatty acid oxidation in which acetyl-CoA is released and the CoA ester of a fatty acid two carbons shorter is formed. The polypeptide is 3-ketoacyl-CoA thiolase (Photorhabdus laumondii subsp. laumondii (strain DSM 15139 / CIP 105565 / TT01) (Photorhabdus luminescens subsp. laumondii)).